The primary structure comprises 175 residues: Large ribosomal subunit protein uL10 (175 aa).

It belongs to the universal ribosomal protein uL10 family. Part of the ribosomal stalk of the 50S ribosomal subunit. The N-terminus interacts with L11 and the large rRNA to form the base of the stalk. The C-terminus forms an elongated spine to which L12 dimers bind in a sequential fashion forming a multimeric L10(L12)X complex.

In terms of biological role, forms part of the ribosomal stalk, playing a central role in the interaction of the ribosome with GTP-bound translation factors. This chain is Large ribosomal subunit protein uL10, found in Prochlorococcus marinus (strain MIT 9301).